We begin with the raw amino-acid sequence, 376 residues long: Glutamate 5-kinase (376 aa).

Position 15 (K15) interacts with ATP. 3 residues coordinate substrate: S56, D143, and N155. ATP is bound at residue 175–176; that stretch reads SD. One can recognise a PUA domain in the interval 281–358; it reads KGTLTIDAGA…PDVMMILGIS (78 aa).

It belongs to the glutamate 5-kinase family.

The protein localises to the cytoplasm. The enzyme catalyses L-glutamate + ATP = L-glutamyl 5-phosphate + ADP. Its pathway is amino-acid biosynthesis; L-proline biosynthesis; L-glutamate 5-semialdehyde from L-glutamate: step 1/2. Functionally, catalyzes the transfer of a phosphate group to glutamate to form L-glutamate 5-phosphate. The protein is Glutamate 5-kinase of Rhodopseudomonas palustris (strain BisB5).